The chain runs to 375 residues: Platelet-derived growth factor receptor-like protein (375 aa).

Residues 1–21 form the signal peptide; sequence MKFWLLLGLLLLHEALEDVAG. The tract at residues 20–63 is disordered; that stretch reads AGQHSPKNKRPKEQGENRIKPTNKKAKPKIPKVKDRDSTDSTAK. Residues 40–50 show a composition bias toward basic residues; sequence PTNKKAKPKIP. The Ig-like C2-type 1 domain maps to 47–159; sequence PKIPKVKDRD…GYICRRDEAK (113 aa). The cysteines at positions 96 and 143 are disulfide-linked. A glycan (N-linked (GlcNAc...) asparagine) is linked at Asn219. In terms of domain architecture, Ig-like C2-type 2 spans 272–375; sequence PSTTILASSN…TTVATTVEFS (104 aa). A disulfide bond links Cys293 and Cys357.

Forms a complex composed of PDGFRL, TNK2 and GRB2.

The protein localises to the secreted. This Mus musculus (Mouse) protein is Platelet-derived growth factor receptor-like protein (Pdgfrl).